The chain runs to 328 residues: RNA-binding protein KhpB (328 aa).

The interval 3–53 (VFTGSTVEEAIQKGLKELDIPRMKAHIKVISREKKGFLGLFGKKPAQVDIE) is jag_N domain. The segment at 54-180 (AISETTVVKA…GLKVETNFDI (127 aa)) is linker. The residue at position 89 (Thr89) is a Phosphothreonine. A KH domain is found at 181-258 (EQVATEVMAY…SRTFYVTINV (78 aa)). One can recognise an R3H domain in the interval 263 to 328 (EHRAEVLQTY…PNRYVVVDTE (66 aa)).

The protein belongs to the KhpB RNA-binding protein family. In terms of assembly, interacts with KhpA; the 2 proteins colocalize throughout the cell cycle, with some increase at midcell in dividing cells. Interacts with StkP which phosphorylates it, interacts with MltG, MreC, RodZ and YidC2. In terms of processing, phosphorylated on Thr-89 by StkP; there is another poorly phosphorylated residue in the protein. Dephosphorylated by PhpP.

Its subcellular location is the cytoplasm. A probable RNA chaperone. Forms a complex with KhpA which binds to cellular RNA and controls its expression. Plays a role in peptidoglycan (PG) homeostasis and cell length regulation. Its function is as follows. Forms a complex with KhpA which presumably binds to about 170 cellular RNAs (mRNA, tRNA intergenic RNA and sRNAs); the proteins alone each bind the same set of RNAs. Suppresses the requirement for PBP2b (penA, a transpeptidase) in peripheral peptidoglycan (PG) synthesis. May function as a pleiotropic RNA chaperone controlling pneumococcal cell division, including PG homeostasis and regulating peripheral PG synthesis by the elongasome. This chain is RNA-binding protein KhpB, found in Streptococcus pneumoniae serotype 2 (strain D39 / NCTC 7466).